Here is a 388-residue protein sequence, read N- to C-terminus: Flavin-dependent monooxygenase (388 aa).

FAD-binding positions include 26–27 (PV) and 45–48 (YERD). Arg54 is a binding site for NADPH. Asp61, Arg117, and Leu139 together coordinate FAD. 2 residues coordinate substrate: Gln192 and Arg213. Residues Asp311 and 321-324 (GQGV) contribute to the FAD site.

This sequence belongs to the aromatic-ring hydroxylase family. TetX subfamily. In terms of assembly, monomer. FAD serves as cofactor.

The protein resides in the cytoplasm. The catalysed reaction is a tetracycline + NADPH + O2 + H(+) = an 11a-hydroxytetracycline + NADP(+) + H2O. The enzyme catalyses tetracycline + NADPH + O2 + H(+) = 11a-hydroxytetracycline + NADP(+) + H2O. It carries out the reaction tigecycline + NADPH + O2 + H(+) = 11a-hydroxytigecycline + NADP(+) + H2O. It catalyses the reaction oxytetracycline + NADPH + O2 + H(+) = 11a-hydroxy-oxytetracycline + NADP(+) + H2O. With respect to regulation, anhydrotetracycline, a poor substrate, prevents tetracycline degradation in vitro. In terms of biological role, an FAD-requiring monooxygenase active on tetracycline antibiotic derivatives, which leads to their inactivation. Hydroxylates carbon 11a of oxytetracycline and tigecycline. Acts on many tetracycline analogs (chlorotetracycline, demeclocycline, doxycycline, minocycline, oxytetracyclinee), probably by monooxygenization. Tigecycline, a new generation tetracycline antibiotic, is rendered less effective against E.coli by this monooxygenation, is much weaker at inhibiting translation in vitro and binds Mg(2+) considerably less well. Expression in E.coli BW25113 reduces its growth rate about 5%. The reaction probably proceeds by FAD reduction by NADPH and, second, hydroxylation of antibiotic in a ping-pong mechanism. Degrades chlortetracycline, probably by monooxygenation. Slowly oxidizes anhydrotetracycline, the final substrate in tetracycline biosynthesis. The sequence is that of Flavin-dependent monooxygenase from Bacteroides thetaiotaomicron.